Reading from the N-terminus, the 390-residue chain is Altered inheritance of mitochondria protein 6 (390 aa).

An N-terminal signal peptide occupies residues 1-26; the sequence is MLGLKGCLTILIGYVIAVCALFSSRG.

This sequence belongs to the AIM6 family.

The protein is Altered inheritance of mitochondria protein 6 (AIM6) of Saccharomyces cerevisiae (strain YJM789) (Baker's yeast).